A 176-amino-acid polypeptide reads, in one-letter code: Large ribosomal subunit protein uL10 (176 aa).

This sequence belongs to the universal ribosomal protein uL10 family. In terms of assembly, part of the ribosomal stalk of the 50S ribosomal subunit. The N-terminus interacts with L11 and the large rRNA to form the base of the stalk. The C-terminus forms an elongated spine to which L12 dimers bind in a sequential fashion forming a multimeric L10(L12)X complex.

In terms of biological role, forms part of the ribosomal stalk, playing a central role in the interaction of the ribosome with GTP-bound translation factors. The sequence is that of Large ribosomal subunit protein uL10 from Nocardia farcinica (strain IFM 10152).